Consider the following 258-residue polypeptide: UPF0246 protein ACIAD2218 (258 aa).

This sequence belongs to the UPF0246 family.

The polypeptide is UPF0246 protein ACIAD2218 (Acinetobacter baylyi (strain ATCC 33305 / BD413 / ADP1)).